A 228-amino-acid polypeptide reads, in one-letter code: Large ribosomal subunit protein mL64 (228 aa).

2 disordered regions span residues 20 to 44 (PRSR…DREN) and 186 to 228 (QRKR…KPSS). The stretch at 98-207 (TMQESLRVQQ…KKEARIAAMA (110 aa)) forms a coiled coil. A Nuclear localization signal motif is present at residues 184-200 (KQQRKRLKEERQRQKKE). The span at 186–202 (QRKRLKEERQRQKKEAR) shows a compositional bias: basic and acidic residues. A compositionally biased stretch (low complexity) spans 212–228 (QDSAEAQDSAASGKPSS).

It belongs to the mitochondrion-specific ribosomal protein mL64 family. Component of the mitochondrial ribosome large subunit (39S) which comprises a 16S rRNA and about 50 distinct proteins. Interacts with GADD45A, GADD45B and GADD45G. Interacts with NR4A1 via the NR4A1 AB domain. Interacts with ATAD3A and ATAD3B.

It is found in the mitochondrion. The protein localises to the nucleus. In terms of biological role, acts as a negative regulator of G1 to S cell cycle phase progression by inhibiting cyclin-dependent kinases. Inhibitory effects are additive with GADD45 proteins but also occur in the absence of GADD45 proteins. Acts as a repressor of the orphan nuclear receptor NR4A1 by inhibiting AB domain-mediated transcriptional activity. May be involved in the hormone-mediated regulation of NR4A1 transcriptional activity. May play a role in mitochondrial protein synthesis. This is Large ribosomal subunit protein mL64 (Gadd45gip1) from Rattus norvegicus (Rat).